Here is a 130-residue protein sequence, read N- to C-terminus: Small ribosomal subunit protein uS9 (130 aa).

This sequence belongs to the universal ribosomal protein uS9 family.

The protein is Small ribosomal subunit protein uS9 of Vibrio cholerae serotype O1 (strain ATCC 39541 / Classical Ogawa 395 / O395).